We begin with the raw amino-acid sequence, 362 residues long: Probable cinnamyl alcohol dehydrogenase 8D (362 aa).

Cys-45 is a binding site for Zn(2+). Thr-47 lines the NADP(+) pocket. Zn(2+) contacts are provided by His-67, Glu-68, Cys-98, Cys-101, Cys-104, Cys-112, and Cys-161. NADP(+) contacts are provided by residues Thr-165, 186 to 191, 209 to 214, Thr-249, Gly-273, and 296 to 298; these read GLGGLG, SSSPAK, and NGV.

Belongs to the zinc-containing alcohol dehydrogenase family. As to quaternary structure, homodimer. The cofactor is Zn(2+).

The catalysed reaction is (E)-cinnamyl alcohol + NADP(+) = (E)-cinnamaldehyde + NADPH + H(+). The enzyme catalyses (E)-coniferol + NADP(+) = (E)-coniferaldehyde + NADPH + H(+). It carries out the reaction (E)-sinapyl alcohol + NADP(+) = (E)-sinapaldehyde + NADPH + H(+). It catalyses the reaction (E)-4-coumaroyl alcohol + NADP(+) = (E)-4-coumaraldehyde + NADPH + H(+). The catalysed reaction is (E)-caffeyl alcohol + NADP(+) = (E)-caffeyl aldehyde + NADPH + H(+). It participates in aromatic compound metabolism; phenylpropanoid biosynthesis. Functionally, involved in lignin biosynthesis. Catalyzes the final step specific for the production of lignin monomers. Catalyzes the NADPH-dependent reduction of coniferaldehyde, 5-hydroxyconiferaldehyde, sinapaldehyde, 4-coumaraldehyde and caffeyl aldehyde to their respective alcohols. This Oryza sativa subsp. japonica (Rice) protein is Probable cinnamyl alcohol dehydrogenase 8D.